Here is a 515-residue protein sequence, read N- to C-terminus: Membrane-bound transcription factor site-2 protease (515 aa).

Topologically, residues 1–3 are cytoplasmic; the sequence is MIP. The helical transmembrane segment at 4–24 threads the bilayer; it reads VSLLVVVVGGWTAVYLADLVL. Residues 25-74 are Lumenal-facing; sequence KSSVYFKHSYEDWLENNGLSISPFHIRWQTSIFNRAFYSWGRRKARMLYQ. 2 helical membrane passes run 75–95 and 96–107; these read WFNF…FLLG and KTLMQTLAQMMA. Topologically, residues 108–140 are lumenal; sequence DSPSPYSSSSSSSSSSSSSSSSSSSLHNEQVLQ. A helical transmembrane segment spans residues 141-165; sequence VVVPGINLPVNQLTYFFAAVLISGV. His-167 provides a ligand contact to Zn(2+). The active site involves Glu-168. 3 consecutive transmembrane segments (helical) span residues 170–182, 183–205, and 225–247; these read GHGI…QVRF, NGFG…TTHL, and FVLA…PFYY. Position 171 (His-171) interacts with Zn(2+). The Lumenal segment spans residues 248–442; it reads TGVGVLITEV…LPVIVETFVK (195 aa). N-linked (GlcNAc...) asparagine glycosylation occurs at Asn-333. Helical transmembrane passes span 443 to 460 and 461 to 472; these read YLIS…VPCF and ALDGQWILNSFL. The Lumenal segment spans residues 473–488; that stretch reads DATLTSVIGDNDVKDL. The helical transmembrane segment at 489 to 509 threads the bilayer; sequence IGFFILLGGSVLLAANVTLGL. At 510–515 the chain is on the cytoplasmic side; sequence WMVTAR.

Belongs to the peptidase M50A family. Zn(2+) serves as cofactor.

Its subcellular location is the membrane. The protein resides in the cytoplasm. It is found in the golgi apparatus membrane. The catalysed reaction is Cleaves several transcription factors that are type-2 transmembrane proteins within membrane-spanning domains. Known substrates include sterol regulatory element-binding protein (SREBP) -1, SREBP-2 and forms of the transcriptional activator ATF6. SREBP-2 is cleaved at the site 477-DRSRILL-|-CVLTFLCLSFNPLTSLLQWGGA-505. The residues Asn-Pro, 11 residues distal to the site of cleavage in the membrane-spanning domain, are important for cleavage by S2P endopeptidase. Replacement of either of these residues does not prevent cleavage, but there is no cleavage if both of these residues are replaced.. Zinc metalloprotease that mediates intramembrane proteolysis of proteins such as ATF6, ATF6B, SREBF1/SREBP1 and SREBF2/SREBP2. Catalyzes the second step in the proteolytic activation of the sterol regulatory element-binding proteins (SREBPs) SREBF1/SREBP1 and SREBF2/SREBP2: cleaves SREBPs within the first transmembrane segment, thereby releasing the N-terminal segment with a portion of the transmembrane segment attached. Mature N-terminal SREBP fragments shuttle to the nucleus and activate gene transcription. Also mediates the second step in the proteolytic activation of the cyclic AMP-dependent transcription factor ATF-6 (ATF6 and ATF6B). Involved in intramembrane proteolysis during bone formation. In astrocytes and osteoblasts, upon DNA damage and ER stress, mediates the second step of the regulated intramembrane proteolytic activation of the transcription factor CREB3L1, leading to the inhibition of cell-cycle progression. In Mus musculus (Mouse), this protein is Membrane-bound transcription factor site-2 protease (Mbtps2).